Consider the following 257-residue polypeptide: 5'-nucleotidase SurE (257 aa).

Residues aspartate 8, aspartate 9, serine 40, and asparagine 93 each contribute to the a divalent metal cation site.

It belongs to the SurE nucleotidase family. The cofactor is a divalent metal cation.

It localises to the cytoplasm. It carries out the reaction a ribonucleoside 5'-phosphate + H2O = a ribonucleoside + phosphate. Nucleotidase that shows phosphatase activity on nucleoside 5'-monophosphates. The protein is 5'-nucleotidase SurE of Phenylobacterium zucineum (strain HLK1).